The primary structure comprises 141 residues: Hemoglobin subunit alpha (141 aa).

The region spanning 1 to 141 (VLSDEDKTNV…VSTVLTSKYR (141 aa)) is the Globin domain. Phosphoserine is present on Ser3. Lys7 carries the N6-succinyllysine modification. Phosphothreonine is present on Thr8. Lys11 is modified (N6-succinyllysine). At Lys16 the chain carries N6-acetyllysine; alternate. Lys16 carries the post-translational modification N6-succinyllysine; alternate. Tyr24 is subject to Phosphotyrosine. Ser35 carries the phosphoserine modification. Lys40 bears the N6-succinyllysine mark. Ser49 carries the post-translational modification Phosphoserine. His58 serves as a coordination point for O2. His87 lines the heme b pocket. Ser102 bears the Phosphoserine mark. The residue at position 108 (Thr108) is a Phosphothreonine. Ser124 and Ser131 each carry phosphoserine. Thr134 and Thr137 each carry phosphothreonine. Residue Ser138 is modified to Phosphoserine.

This sequence belongs to the globin family. As to quaternary structure, heterotetramer of two alpha chains and two beta chains. In terms of tissue distribution, red blood cells.

Functionally, involved in oxygen transport from the lung to the various peripheral tissues. Its function is as follows. Hemopressin acts as an antagonist peptide of the cannabinoid receptor CNR1. Hemopressin-binding efficiently blocks cannabinoid receptor CNR1 and subsequent signaling. This chain is Hemoglobin subunit alpha (HBA), found in Trichechus inunguis (Amazon manatee).